We begin with the raw amino-acid sequence, 959 residues long: Vacuolar membrane protease (959 aa).

Residues 1-13 (MARLNPLSFTPGP) are Cytoplasmic-facing. Residues 14 to 34 (VIFFTCAVYIALFAALLTVHL) traverse the membrane as a helical segment. The Vacuolar portion of the chain corresponds to 35–378 (RVPDYPSKTP…KVFVVFQLHT (344 aa)). Residues asparagine 48, asparagine 102, and asparagine 105 are each glycosylated (N-linked (GlcNAc...) asparagine). The segment at 128-149 (GSEDDEPYHSPQSSPPGERRLD) is disordered. The Zn(2+) site is built by histidine 158 and aspartate 170. Catalysis depends on glutamate 204, which acts as the Proton acceptor. Zn(2+) is bound by residues glutamate 205, glutamate 230, and histidine 303. A helical transmembrane segment spans residues 379–399 (MFALCVTLLVVAPLFLIGLTF). The Cytoplasmic segment spans residues 400 to 432 (GLSKADKNYLFARKAYMYSSDDDHPVHLYGWRG). A helical transmembrane segment spans residues 433 to 453 (FFRFPIVFSIATAVVVGLAYL). The Vacuolar portion of the chain corresponds to 454–463 (MVRLNPLILY). The helical transmembrane segment at 464-484 (SSPYAVWSMMLSAWFSVAWFF) threads the bilayer. The Cytoplasmic segment spans residues 485–498 (SRGASAMRPSALQR). The chain crosses the membrane as a helical span at residues 499–519 (MYALIWLFAGSFALLAFVTVL). Topologically, residues 520–524 (SNNYQ) are vacuolar. The chain crosses the membrane as a helical span at residues 525 to 545 (VAGGYFALFYFAGIFLALVLS). The Cytoplasmic portion of the chain corresponds to 546 to 645 (YLELFFAPTK…YPGEQDWSGK (100 aa)). Disordered regions lie at residues 566–594 (DEPVSRPLTGTTTAARSEEPPIADDDATE) and 606–635 (FARHSGRRDSIDDENGNRDEEPVQLDLKQP). The segment covering 612 to 626 (RRDSIDDENGNRDEE) has biased composition (basic and acidic residues). A helical membrane pass occupies residues 646-666 (LPGWLWLLQLLLVAPIVVILV). Residues 667 to 688 (GQIALLLTSALHQTPADGNSSL) are Vacuolar-facing. Asparagine 685 carries an N-linked (GlcNAc...) asparagine glycan. A helical membrane pass occupies residues 689–709 (FVYLAFALLTTLLLAPIGPFI). The Cytoplasmic portion of the chain corresponds to 710 to 716 (HRFTWHV). The chain crosses the membrane as a helical span at residues 717 to 737 (PTFVFLVCVATVIYNLVAFPF). At 738 to 959 (SREHRLKVYF…LVEGFKYFQV (222 aa)) the chain is on the vacuolar side. N-linked (GlcNAc...) asparagine glycosylation is found at asparagine 785, asparagine 818, asparagine 834, asparagine 864, and asparagine 899.

The protein belongs to the peptidase M28 family. Requires Zn(2+) as cofactor.

Its subcellular location is the vacuole membrane. May be involved in vacuolar sorting and osmoregulation. The chain is Vacuolar membrane protease from Phaeosphaeria nodorum (strain SN15 / ATCC MYA-4574 / FGSC 10173) (Glume blotch fungus).